A 525-amino-acid polypeptide reads, in one-letter code: 2,3-bisphosphoglycerate-independent phosphoglycerate mutase 2 (525 aa).

Mn(2+)-binding residues include Asp-14 and Ser-64. Catalysis depends on Ser-64, which acts as the Phosphoserine intermediate. Substrate is bound by residues His-125, Arg-155–Asp-156, Arg-187, Arg-193, Arg-274–Arg-277, and Lys-347. Mn(2+) is bound by residues Asp-414, His-418, Asp-455, His-456, and His-474.

This sequence belongs to the BPG-independent phosphoglycerate mutase family. The cofactor is Mn(2+).

The catalysed reaction is (2R)-2-phosphoglycerate = (2R)-3-phosphoglycerate. Its pathway is carbohydrate degradation; glycolysis; pyruvate from D-glyceraldehyde 3-phosphate: step 3/5. Functionally, catalyzes the interconversion of 2-phosphoglycerate and 3-phosphoglycerate. This Methanosarcina barkeri (strain Fusaro / DSM 804) protein is 2,3-bisphosphoglycerate-independent phosphoglycerate mutase 2.